Here is a 425-residue protein sequence, read N- to C-terminus: UDP-N-acetylglucosamine 1-carboxyvinyltransferase (425 aa).

22–23 (KN) serves as a coordination point for phosphoenolpyruvate. Arg98 provides a ligand contact to UDP-N-acetyl-alpha-D-glucosamine. Cys122 (proton donor) is an active-site residue. The residue at position 122 (Cys122) is a 2-(S-cysteinyl)pyruvic acid O-phosphothioketal. UDP-N-acetyl-alpha-D-glucosamine is bound by residues 127–131 (RPVDQ), Asp313, and Ile335.

Belongs to the EPSP synthase family. MurA subfamily.

The protein resides in the cytoplasm. The catalysed reaction is phosphoenolpyruvate + UDP-N-acetyl-alpha-D-glucosamine = UDP-N-acetyl-3-O-(1-carboxyvinyl)-alpha-D-glucosamine + phosphate. The protein operates within cell wall biogenesis; peptidoglycan biosynthesis. Functionally, cell wall formation. Adds enolpyruvyl to UDP-N-acetylglucosamine. The sequence is that of UDP-N-acetylglucosamine 1-carboxyvinyltransferase from Xylella fastidiosa (strain M23).